The following is a 414-amino-acid chain: MSGIIATYLIHDDSHNLEKKAEQIAIGLTIGSWTHLPHLLQEQLKQHKGNVIHIEALDEQEHINSYLGKKVSRGLIKIHYPSLNFSPDLPAILTTTFGKLSLDGEIKLIDLTFSDELKKQFPGPKFGIEGIRNLLQVQDRPLLMSIFKGMIGRNIGYLKTQLRDQAIGGVDIVKDDEILFENSLTPLIKRIESGKEVLQSVYETYGHKTLYAVNLTGRTYDLKENAKRAVVAGADILLFNVFSYGLDVLQALVEDDEIPIPIMAHPAVSGAYSSSKLYGFSSPLLLGKLLRYAGADFSLFPSPYGNVALEKEEALLITAALTEEDHYFKKSFSVPSAGIHPGFVPFILRDFGKDVVINAGGGIHGHPNGAQGGGKAFRAAIEATLQGKPLHEVDEINLHSALQIWGNPSHEVKL.

Lys-99 (proton acceptor) is an active-site residue. Substrate-binding positions include Lys-148, 174 to 177, His-265, Gly-338, and 360 to 361; these read KDDE and GG. Mg(2+) is bound by residues Lys-174, Asp-176, and Glu-177. Lys-174 carries the post-translational modification N6-carboxylysine.

This sequence belongs to the RuBisCO large chain family. Type IV subfamily. In terms of assembly, homodimer. Mg(2+) serves as cofactor.

It carries out the reaction 5-methylsulfanyl-2,3-dioxopentyl phosphate = 2-hydroxy-5-methylsulfanyl-3-oxopent-1-enyl phosphate. It participates in amino-acid biosynthesis; L-methionine biosynthesis via salvage pathway; L-methionine from S-methyl-5-thio-alpha-D-ribose 1-phosphate: step 3/6. Its function is as follows. Catalyzes the enolization of 2,3-diketo-5-methylthiopentyl-1-phosphate (DK-MTP-1-P) into 2-hydroxy-3-keto-5-methylthiopentenyl-1-phosphate (HK-MTPenyl-1-P). The protein is 2,3-diketo-5-methylthiopentyl-1-phosphate enolase of Bacillus mycoides (strain KBAB4) (Bacillus weihenstephanensis).